We begin with the raw amino-acid sequence, 479 residues long: Anaerobic nitric oxide reductase flavorubredoxin (479 aa).

The tract at residues 30 to 210 (LRGSSYNSYL…PFSRLVTPKI (181 aa)) is zinc metallo-hydrolase. Residues His79, Glu81, Asp83, His147, Asp166, and His227 each coordinate Fe cation. The 140-residue stretch at 254–393 (ITIFYDTMSN…LCRQHGRDIA (140 aa)) folds into the Flavodoxin-like domain. FMN is bound by residues 260–264 (TMSNN) and 342–369 (AFGS…EMSL). The 52-residue stretch at 423–474 (GPKMQCSVCQWIYDPALGEPLQDVAPGTPWSDVPDNFLCPECSLGKDVFDVL) folds into the Rubredoxin-like domain. Fe cation is bound by residues Cys428, Cys431, Cys461, and Cys464.

In the N-terminal section; belongs to the zinc metallo-hydrolase group 3 family. Homotetramer. Fe cation is required as a cofactor. The cofactor is FMN.

It localises to the cytoplasm. The protein operates within nitrogen metabolism; nitric oxide reduction. Functionally, anaerobic nitric oxide reductase; uses NADH to detoxify nitric oxide (NO), protecting several 4Fe-4S NO-sensitive enzymes. Has at least 2 reductase partners, only one of which (NorW, flavorubredoxin reductase) has been identified. NO probably binds to the di-iron center; electrons enter from the NorW at rubredoxin and are transferred sequentially to the FMN center and the di-iron center. Also able to function as an aerobic oxygen reductase. The polypeptide is Anaerobic nitric oxide reductase flavorubredoxin (Salmonella paratyphi B (strain ATCC BAA-1250 / SPB7)).